Consider the following 58-residue polypeptide: Probable U-exon protein (58 aa).

The polypeptide is Probable U-exon protein (Snake adenovirus serotype 1 (SnAdV-1)).